The following is a 430-amino-acid chain: Tol-Pal system protein TolB (430 aa).

A signal peptide spans 1–21; that stretch reads MKQALRVAFGFLILWASVLHA.

This sequence belongs to the TolB family. In terms of assembly, the Tol-Pal system is composed of five core proteins: the inner membrane proteins TolA, TolQ and TolR, the periplasmic protein TolB and the outer membrane protein Pal. They form a network linking the inner and outer membranes and the peptidoglycan layer.

Its subcellular location is the periplasm. In terms of biological role, part of the Tol-Pal system, which plays a role in outer membrane invagination during cell division and is important for maintaining outer membrane integrity. TolB occupies a key intermediary position in the Tol-Pal system because it communicates directly with both membrane-embedded components, Pal in the outer membrane and TolA in the inner membrane. The sequence is that of Tol-Pal system protein TolB from Shigella dysenteriae serotype 1 (strain Sd197).